The following is a 309-amino-acid chain: MLENIKQTITRWDERNPWTNVYGLARSIIALSSLLTLLINHPSLIMKPASGISSYPACKMNLSLFCLGENNYMMLNLFRWVCIAILVLVVIGWRPRITGVLHWYVSYSLQSSLIVIDGGEQAAAVMTFLLLPITLTDPRKWHWSTRPIEGKRTLGKITAFISYFVIRIQVAVLYFHSTVAKLSQQEWVDGTAVYYFAQEKTIGFNGFFQALTKPIVTSPFVVIPTWGTLLVQIVIFAALFAPKKHWRLILIIAVFMHEIFAVMLGLISFSIIMAGILILYLTPIDSTIQFTYIRRLLWNKKHKKGEVSV.

6 helical membrane-spanning segments follow: residues 28 to 48 (IIAL…IMKP), 73 to 93 (MMLN…VIGW), 113 to 133 (LIVI…LLPI), 157 to 177 (ITAF…YFHS), 220 to 240 (FVVI…AALF), and 259 to 279 (IFAV…ILIL).

It localises to the cell membrane. This is an uncharacterized protein from Bacillus subtilis (strain 168).